The sequence spans 99 residues: Plastocyanin A'/A'' (99 aa).

Positions 1–99 (IEVLLGSDDG…AGMVGKVTVN (99 aa)) constitute a Plastocyanin-like domain. Cu cation-binding residues include His-37, Cys-84, His-87, and Met-92.

The protein belongs to the plastocyanin family. Cu(2+) serves as cofactor.

The protein localises to the plastid. Its subcellular location is the chloroplast thylakoid membrane. Functionally, participates in electron transfer between P700 and the cytochrome b6-f complex in photosystem I. This is Plastocyanin A'/A'' from Nicotiana tabacum (Common tobacco).